Here is a 608-residue protein sequence, read N- to C-terminus: Protein UL27 (608 aa).

Pro residues predominate over residues 1 to 13 (MNPVDQPPPPLPT). A disordered region spans residues 1-33 (MNPVDQPPPPLPTQQPEEQAKEDHDDGDERLFR). Over residues 18-33 (EQAKEDHDDGDERLFR) the composition is skewed to basic and acidic residues.

It belongs to the herpesviridae U4 family. As to quaternary structure, interacts with host KAT5, PSME3 and EP400.

It is found in the host nucleus. The protein localises to the host nucleolus. Promotes a cell cycle arrest in G0/G1 by inducing the proteasomal degradation of host histone acetyltransferase KAT5/Tip60. In Human cytomegalovirus (strain AD169) (HHV-5), this protein is Protein UL27 (UL27).